The primary structure comprises 125 residues: Small ribosomal subunit protein uS12 (125 aa).

D89 carries the post-translational modification 3-methylthioaspartic acid.

The protein belongs to the universal ribosomal protein uS12 family. As to quaternary structure, part of the 30S ribosomal subunit. Contacts proteins S8 and S17. May interact with IF1 in the 30S initiation complex.

Functionally, with S4 and S5 plays an important role in translational accuracy. In terms of biological role, interacts with and stabilizes bases of the 16S rRNA that are involved in tRNA selection in the A site and with the mRNA backbone. Located at the interface of the 30S and 50S subunits, it traverses the body of the 30S subunit contacting proteins on the other side and probably holding the rRNA structure together. The combined cluster of proteins S8, S12 and S17 appears to hold together the shoulder and platform of the 30S subunit. The chain is Small ribosomal subunit protein uS12 from Clostridium kluyveri (strain ATCC 8527 / DSM 555 / NBRC 12016 / NCIMB 10680 / K1).